A 137-amino-acid chain; its full sequence is Holo-[acyl-carrier-protein] synthase (137 aa).

Positions 8 and 57 each coordinate Mg(2+).

The protein belongs to the P-Pant transferase superfamily. AcpS family. Mg(2+) serves as cofactor.

Its subcellular location is the cytoplasm. The enzyme catalyses apo-[ACP] + CoA = holo-[ACP] + adenosine 3',5'-bisphosphate + H(+). Its function is as follows. Transfers the 4'-phosphopantetheine moiety from coenzyme A to a Ser of acyl-carrier-protein. The polypeptide is Holo-[acyl-carrier-protein] synthase (Cereibacter sphaeroides (strain ATCC 17023 / DSM 158 / JCM 6121 / CCUG 31486 / LMG 2827 / NBRC 12203 / NCIMB 8253 / ATH 2.4.1.) (Rhodobacter sphaeroides)).